The chain runs to 351 residues: Phosphoribosylformylglycinamidine cyclo-ligase (351 aa).

It belongs to the AIR synthase family.

It is found in the cytoplasm. It catalyses the reaction 2-formamido-N(1)-(5-O-phospho-beta-D-ribosyl)acetamidine + ATP = 5-amino-1-(5-phospho-beta-D-ribosyl)imidazole + ADP + phosphate + H(+). It functions in the pathway purine metabolism; IMP biosynthesis via de novo pathway; 5-amino-1-(5-phospho-D-ribosyl)imidazole from N(2)-formyl-N(1)-(5-phospho-D-ribosyl)glycinamide: step 2/2. The polypeptide is Phosphoribosylformylglycinamidine cyclo-ligase (Synechococcus sp. (strain JA-3-3Ab) (Cyanobacteria bacterium Yellowstone A-Prime)).